Reading from the N-terminus, the 82-residue chain is Small ribosomal subunit protein bS16 (82 aa).

It belongs to the bacterial ribosomal protein bS16 family.

This is Small ribosomal subunit protein bS16 from Vibrio campbellii (strain ATCC BAA-1116).